Here is a 258-residue protein sequence, read N- to C-terminus: MNILDRIIETKRQEVARLKIDGVAQAEARQLNQSIHQSLGGTDLSVIAEIKRASPSKGDISLNVDPVAQAKRYAESGATVISVLTDQTYFKGSMEDLAAVTKAVDVPVLCKDFMIDRIQIDLAKAHGASLILLIVAALDDETLEDLYAYAYASGLEVLVEVHDALELKRAERLQAKILGINNRNLKKFEVSLDTSLELLKTKSPGVRYISESGIKTVAEAQMLHAAGADGILIGETLMRAENPADFIEAVNGVKHDTY.

It belongs to the TrpC family.

The catalysed reaction is 1-(2-carboxyphenylamino)-1-deoxy-D-ribulose 5-phosphate + H(+) = (1S,2R)-1-C-(indol-3-yl)glycerol 3-phosphate + CO2 + H2O. It functions in the pathway amino-acid biosynthesis; L-tryptophan biosynthesis; L-tryptophan from chorismate: step 4/5. The chain is Indole-3-glycerol phosphate synthase from Exiguobacterium sibiricum (strain DSM 17290 / CCUG 55495 / CIP 109462 / JCM 13490 / 255-15).